Consider the following 246-residue polypeptide: Putative 4'-phosphopantetheinyl transferase slr0495 (246 aa).

The Mg(2+) site is built by Asp110 and Glu156.

This sequence belongs to the P-Pant transferase superfamily. Gsp/Sfp/HetI/AcpT family. Requires Mg(2+) as cofactor.

Its function is as follows. Probably transfers the 4'-phosphopantetheine moiety from coenzyme A (CoA) to a serine residue of a carrier protein domain. The sequence is that of Putative 4'-phosphopantetheinyl transferase slr0495 from Synechocystis sp. (strain ATCC 27184 / PCC 6803 / Kazusa).